Here is a 61-residue protein sequence, read N- to C-terminus: Large ribosomal subunit protein bL32 (61 aa).

A compositionally biased stretch (basic residues) spans 1-16; that stretch reads MAVPRRKTSPSRRGMR. Residues 1-61 are disordered; sequence MAVPRRKTSP…RQVLKVKKED (61 aa). Basic and acidic residues predominate over residues 17–44; it reads RSADALKKPTYVEDKDSGELRRPHHLDL.

It belongs to the bacterial ribosomal protein bL32 family.

The sequence is that of Large ribosomal subunit protein bL32 from Afipia carboxidovorans (strain ATCC 49405 / DSM 1227 / KCTC 32145 / OM5) (Oligotropha carboxidovorans).